Reading from the N-terminus, the 181-residue chain is uncharacterized protein (181 aa).

The interval 126-148 is disordered; that stretch reads SYKDKEEEEDEDPEEDDDDPRVQ. The segment covering 131 to 144 has biased composition (acidic residues); sequence EEEEDEDPEEDDDD.

The protein belongs to the chlamydial CPn_0422/CT_273/TC_0545 family.

This is an uncharacterized protein from Chlamydia pneumoniae (Chlamydophila pneumoniae).